The chain runs to 218 residues: Thiamine-phosphate synthase (218 aa).

4-amino-2-methyl-5-(diphosphooxymethyl)pyrimidine contacts are provided by residues 43–47 (QFRDK) and N78. D79 and D98 together coordinate Mg(2+). 4-amino-2-methyl-5-(diphosphooxymethyl)pyrimidine is bound at residue S117. Residue 143–145 (TNS) coordinates 2-[(2R,5Z)-2-carboxy-4-methylthiazol-5(2H)-ylidene]ethyl phosphate. K146 contributes to the 4-amino-2-methyl-5-(diphosphooxymethyl)pyrimidine binding site. 2-[(2R,5Z)-2-carboxy-4-methylthiazol-5(2H)-ylidene]ethyl phosphate is bound by residues G174 and 194–195 (IS).

This sequence belongs to the thiamine-phosphate synthase family. The cofactor is Mg(2+).

The enzyme catalyses 2-[(2R,5Z)-2-carboxy-4-methylthiazol-5(2H)-ylidene]ethyl phosphate + 4-amino-2-methyl-5-(diphosphooxymethyl)pyrimidine + 2 H(+) = thiamine phosphate + CO2 + diphosphate. The catalysed reaction is 2-(2-carboxy-4-methylthiazol-5-yl)ethyl phosphate + 4-amino-2-methyl-5-(diphosphooxymethyl)pyrimidine + 2 H(+) = thiamine phosphate + CO2 + diphosphate. It catalyses the reaction 4-methyl-5-(2-phosphooxyethyl)-thiazole + 4-amino-2-methyl-5-(diphosphooxymethyl)pyrimidine + H(+) = thiamine phosphate + diphosphate. The protein operates within cofactor biosynthesis; thiamine diphosphate biosynthesis; thiamine phosphate from 4-amino-2-methyl-5-diphosphomethylpyrimidine and 4-methyl-5-(2-phosphoethyl)-thiazole: step 1/1. In terms of biological role, condenses 4-methyl-5-(beta-hydroxyethyl)thiazole monophosphate (THZ-P) and 2-methyl-4-amino-5-hydroxymethyl pyrimidine pyrophosphate (HMP-PP) to form thiamine monophosphate (TMP). The protein is Thiamine-phosphate synthase of Lactococcus lactis subsp. cremoris (strain MG1363).